We begin with the raw amino-acid sequence, 341 residues long: tRNA N6-adenosine threonylcarbamoyltransferase (341 aa).

Residues His-111 and His-115 each contribute to the Fe cation site. Substrate-binding positions include 134–138 (LVSGG), Asp-167, Gly-180, and Asn-276. Asp-304 serves as a coordination point for Fe cation.

The protein belongs to the KAE1 / TsaD family. It depends on Fe(2+) as a cofactor.

The protein localises to the cytoplasm. The catalysed reaction is L-threonylcarbamoyladenylate + adenosine(37) in tRNA = N(6)-L-threonylcarbamoyladenosine(37) in tRNA + AMP + H(+). In terms of biological role, required for the formation of a threonylcarbamoyl group on adenosine at position 37 (t(6)A37) in tRNAs that read codons beginning with adenine. Is involved in the transfer of the threonylcarbamoyl moiety of threonylcarbamoyl-AMP (TC-AMP) to the N6 group of A37, together with TsaE and TsaB. TsaD likely plays a direct catalytic role in this reaction. The sequence is that of tRNA N6-adenosine threonylcarbamoyltransferase from Pseudomonas entomophila (strain L48).